Consider the following 184-residue polypeptide: Shikimate kinase (184 aa).

An ATP-binding site is contributed by 12 to 17 (GSGKST). Ser-16 contacts Mg(2+). The substrate site is built by Asp-34, Arg-58, and Gly-80. ATP is bound at residue Arg-117. Arg-136 lines the substrate pocket. Arg-153 lines the ATP pocket. The segment at 164–184 (SRLDDPTPNTSPSSTASGAAT) is disordered. The span at 169–184 (PTPNTSPSSTASGAAT) shows a compositional bias: low complexity.

Belongs to the shikimate kinase family. As to quaternary structure, monomer. It depends on Mg(2+) as a cofactor.

It localises to the cytoplasm. The catalysed reaction is shikimate + ATP = 3-phosphoshikimate + ADP + H(+). It functions in the pathway metabolic intermediate biosynthesis; chorismate biosynthesis; chorismate from D-erythrose 4-phosphate and phosphoenolpyruvate: step 5/7. In terms of biological role, catalyzes the specific phosphorylation of the 3-hydroxyl group of shikimic acid using ATP as a cosubstrate. The protein is Shikimate kinase of Mycobacterium ulcerans (strain Agy99).